The following is a 515-amino-acid chain: Maturase K (515 aa).

It belongs to the intron maturase 2 family. MatK subfamily.

Its subcellular location is the plastid. The protein localises to the chloroplast. In terms of biological role, usually encoded in the trnK tRNA gene intron. Probably assists in splicing its own and other chloroplast group II introns. The sequence is that of Maturase K from Pinus patula (Mexican weeping pine).